The chain runs to 426 residues: Histidine--tRNA ligase (426 aa).

This sequence belongs to the class-II aminoacyl-tRNA synthetase family. Homodimer.

The protein resides in the cytoplasm. It carries out the reaction tRNA(His) + L-histidine + ATP = L-histidyl-tRNA(His) + AMP + diphosphate + H(+). The protein is Histidine--tRNA ligase of Streptococcus pyogenes serotype M1.